We begin with the raw amino-acid sequence, 1006 residues long: Probable protein phosphatase DDB_G0279461 (1006 aa).

Positions 1 to 12 (MMVPSLSTSISS) are enriched in polar residues. Disordered regions lie at residues 1–119 (MMVP…NNKE), 146–188 (SHAS…RSNS), 214–269 (SSED…NGIR), 312–387 (DAES…PPNQ), 459–513 (NINN…NNIQ), 525–563 (DYNI…NSKF), and 604–642 (GSIP…TSAS). A compositionally biased stretch (acidic residues) spans 59–69 (NEEEGTADNEL). Residues 65-122 (ADNELESLMSLVNDNNNNNNNTSGIDDDNNNDIDDNNNNNNNNNNNNNNNNNNKEGLN) are a coiled coil. Low complexity predominate over residues 77-88 (NDNNNNNNNTSG). A compositionally biased stretch (acidic residues) spans 89-99 (IDDDNNNDIDD). Residues 100 to 117 (NNNNNNNNNNNNNNNNNN) are compositionally biased toward low complexity. The span at 146–158 (SHASVSNQSSNGS) shows a compositional bias: polar residues. Composition is skewed to low complexity over residues 220 to 234 (SCHN…NKNN), 244 to 254 (NINNNNNNNCN), and 316 to 387 (NYNN…PPNQ). A coiled-coil region spans residues 450–516 (KIDNLNKNIN…NNNNNIQDIQ (67 aa)). Residues 466 to 481 (TDSQQPLPSIDVNFSH) are compositionally biased toward polar residues. Low complexity predominate over residues 482 to 511 (NNNNNNNDNDNNNNNNNNNNNNNNNNNNNN). Over residues 525-538 (DYNIQEGNDINNDN) the composition is skewed to polar residues. Composition is skewed to low complexity over residues 552–561 (SSNNNNNNNS) and 613–639 (NNNN…TTTT). A PPM-type phosphatase domain is found at 744–1005 (DINKRGLKRA…DNISIIVVTL (262 aa)). Residues Asp-784, Gly-785, Asp-956, and Asp-996 each coordinate Mn(2+).

It in the C-terminal section; belongs to the PP2C family. The cofactor is Mg(2+). Mn(2+) serves as cofactor.

The catalysed reaction is O-phospho-L-seryl-[protein] + H2O = L-seryl-[protein] + phosphate. The enzyme catalyses O-phospho-L-threonyl-[protein] + H2O = L-threonyl-[protein] + phosphate. This Dictyostelium discoideum (Social amoeba) protein is Probable protein phosphatase DDB_G0279461.